The following is a 332-amino-acid chain: Biotin synthase (332 aa).

A Radical SAM core domain is found at 51–278 (RTIQLSTLMS…KSYVRLSAGR (228 aa)). Positions 66, 70, and 73 each coordinate [4Fe-4S] cluster. The [2Fe-2S] cluster site is built by cysteine 110, cysteine 141, cysteine 201, and arginine 273.

The protein belongs to the radical SAM superfamily. Biotin synthase family. In terms of assembly, homodimer. It depends on [4Fe-4S] cluster as a cofactor. [2Fe-2S] cluster is required as a cofactor.

It catalyses the reaction (4R,5S)-dethiobiotin + (sulfur carrier)-SH + 2 reduced [2Fe-2S]-[ferredoxin] + 2 S-adenosyl-L-methionine = (sulfur carrier)-H + biotin + 2 5'-deoxyadenosine + 2 L-methionine + 2 oxidized [2Fe-2S]-[ferredoxin]. The protein operates within cofactor biosynthesis; biotin biosynthesis; biotin from 7,8-diaminononanoate: step 2/2. Functionally, catalyzes the conversion of dethiobiotin (DTB) to biotin by the insertion of a sulfur atom into dethiobiotin via a radical-based mechanism. The chain is Biotin synthase from Haemophilus influenzae (strain PittGG).